Here is a 376-residue protein sequence, read N- to C-terminus: Queuine tRNA-ribosyltransferase (376 aa).

Asp-93 functions as the Proton acceptor in the catalytic mechanism. Substrate-binding positions include 93–97, Asp-147, Gln-190, and Gly-217; that span reads DSGGF. The segment at 248–254 is RNA binding; it reads GVGTPDD. The active-site Nucleophile is the Asp-267. Positions 272–276 are RNA binding; important for wobble base 34 recognition; that stretch reads TRSGR.

The protein belongs to the queuine tRNA-ribosyltransferase family. In terms of assembly, homodimer. Within each dimer, one monomer is responsible for RNA recognition and catalysis, while the other monomer binds to the replacement base PreQ1.

The catalysed reaction is 7-aminomethyl-7-carbaguanine + guanosine(34) in tRNA = 7-aminomethyl-7-carbaguanosine(34) in tRNA + guanine. It functions in the pathway tRNA modification; tRNA-queuosine biosynthesis. In terms of biological role, catalyzes the base-exchange of a guanine (G) residue with the queuine precursor 7-aminomethyl-7-deazaguanine (PreQ1) at position 34 (anticodon wobble position) in tRNAs with GU(N) anticodons (tRNA-Asp, -Asn, -His and -Tyr). Catalysis occurs through a double-displacement mechanism. The nucleophile active site attacks the C1' of nucleotide 34 to detach the guanine base from the RNA, forming a covalent enzyme-RNA intermediate. The proton acceptor active site deprotonates the incoming PreQ1, allowing a nucleophilic attack on the C1' of the ribose to form the product. After dissociation, two additional enzymatic reactions on the tRNA convert PreQ1 to queuine (Q), resulting in the hypermodified nucleoside queuosine (7-(((4,5-cis-dihydroxy-2-cyclopenten-1-yl)amino)methyl)-7-deazaguanosine). The protein is Queuine tRNA-ribosyltransferase of Agrobacterium fabrum (strain C58 / ATCC 33970) (Agrobacterium tumefaciens (strain C58)).